The chain runs to 607 residues: MPLMVQSAPSTEAIQLPKTSESAQLKRIRHTMSHVMAMAVQKLFPKAQVTIGPWTETGFYYDFDTPEPFTEADLKAIKKEMVKIIQQKLPVVREEVSREEAQQRIEALGEPYKLEILQGLTEPITLYHLGDRWWDLCAGPHVETTAELNPKAFDLESVAGAYWRGDETKAQLQRIYGTAWETPEQLTEYKRRKEEALKRDHRKLGRELGLFLFADPVGPGLPLWTPKGTILRSTLEDFLKQEQMKRGYQSVVTPHLARVDLFKVSGHWQNYREDMFPMMAEDDEARGLEQGFVLKPMNCPFHIQIYKNELRSYRELPIRLAEFGTVYRYEQSGELGGLTRVRGFTVDDSHLFVRPDQLASEFLSVVDLILSVFKALNLKKFKARLSFRDPESDKYIGSDDVWEKAESAIQAAAETLGMDYFIGVGEAAFYGPKLDFIFQDALDREWQLGTVQVDYNLPERFDLEYVAEDGSRQRPVMIHRAPFGSLERLIGILIEEYAGDFPLWLAPEQIRLLPVTETVLDYCQQVADQLRAIGVRVQVDCSGDRLGKLIRNAEKAKIPVMAVIGAQEAESETLSIRTRATGDLGSLTVADLTKRLSSAIAEKLPHL.

The interval 200–502 (DHRKLGRELG…LIEEYAGDFP (303 aa)) is catalytic. Positions 299, 350, and 479 each coordinate Zn(2+).

Belongs to the class-II aminoacyl-tRNA synthetase family. As to quaternary structure, homodimer. Zn(2+) is required as a cofactor.

The protein resides in the cytoplasm. It carries out the reaction tRNA(Thr) + L-threonine + ATP = L-threonyl-tRNA(Thr) + AMP + diphosphate + H(+). Functionally, catalyzes the attachment of threonine to tRNA(Thr) in a two-step reaction: L-threonine is first activated by ATP to form Thr-AMP and then transferred to the acceptor end of tRNA(Thr). Also edits incorrectly charged L-seryl-tRNA(Thr). In Synechococcus sp. (strain ATCC 27144 / PCC 6301 / SAUG 1402/1) (Anacystis nidulans), this protein is Threonine--tRNA ligase.